The sequence spans 78 residues: Translational regulator CsrA (78 aa).

It belongs to the CsrA/RsmA family. As to quaternary structure, homodimer; the beta-strands of each monomer intercalate to form a hydrophobic core, while the alpha-helices form wings that extend away from the core.

The protein localises to the cytoplasm. Its function is as follows. A translational regulator that binds mRNA to regulate translation initiation and/or mRNA stability. Usually binds in the 5'-UTR at or near the Shine-Dalgarno sequence preventing ribosome-binding, thus repressing translation. Its main target seems to be the major flagellin gene, while its function is anatagonized by FliW. This is Translational regulator CsrA from Desulfovibrio desulfuricans (strain ATCC 27774 / DSM 6949 / MB).